The following is a 294-amino-acid chain: Formamidopyrimidine-DNA glycosylase (294 aa).

Pro2 acts as the Schiff-base intermediate with DNA in catalysis. Residue Glu3 is the Proton donor of the active site. Lys61 acts as the Proton donor; for beta-elimination activity in catalysis. DNA is bound by residues His104, Arg123, and Lys169. Residues Ala255 to Pro289 form an FPG-type zinc finger. Residue Arg279 is the Proton donor; for delta-elimination activity of the active site.

The protein belongs to the FPG family. Monomer. Zn(2+) serves as cofactor.

It catalyses the reaction Hydrolysis of DNA containing ring-opened 7-methylguanine residues, releasing 2,6-diamino-4-hydroxy-5-(N-methyl)formamidopyrimidine.. The enzyme catalyses 2'-deoxyribonucleotide-(2'-deoxyribose 5'-phosphate)-2'-deoxyribonucleotide-DNA = a 3'-end 2'-deoxyribonucleotide-(2,3-dehydro-2,3-deoxyribose 5'-phosphate)-DNA + a 5'-end 5'-phospho-2'-deoxyribonucleoside-DNA + H(+). In terms of biological role, involved in base excision repair of DNA damaged by oxidation or by mutagenic agents. Acts as a DNA glycosylase that recognizes and removes damaged bases. Has a preference for oxidized purines, such as 7,8-dihydro-8-oxoguanine (8-oxoG). Has AP (apurinic/apyrimidinic) lyase activity and introduces nicks in the DNA strand. Cleaves the DNA backbone by beta-delta elimination to generate a single-strand break at the site of the removed base with both 3'- and 5'-phosphates. The polypeptide is Formamidopyrimidine-DNA glycosylase (Nocardia farcinica (strain IFM 10152)).